Reading from the N-terminus, the 127-residue chain is MARVKRAVNAHKKRRAILEAASGYRGQRSRLYRKAKEQVTHSLVYNYNDRKKRKGDFRQLWIQRINAAARQNGMTYNRLIQGLKAANIEVDRKILAELAVNDANAFAALVEVAQKALPSDVNAPKAA.

Belongs to the bacterial ribosomal protein bL20 family.

Functionally, binds directly to 23S ribosomal RNA and is necessary for the in vitro assembly process of the 50S ribosomal subunit. It is not involved in the protein synthesizing functions of that subunit. This is Large ribosomal subunit protein bL20 from Streptomyces griseus subsp. griseus (strain JCM 4626 / CBS 651.72 / NBRC 13350 / KCC S-0626 / ISP 5235).